A 154-amino-acid chain; its full sequence is Large ribosomal subunit protein uL13 (154 aa).

This sequence belongs to the universal ribosomal protein uL13 family. In terms of assembly, part of the 50S ribosomal subunit.

Its function is as follows. This protein is one of the early assembly proteins of the 50S ribosomal subunit, although it is not seen to bind rRNA by itself. It is important during the early stages of 50S assembly. This Cereibacter sphaeroides (strain ATCC 17025 / ATH 2.4.3) (Rhodobacter sphaeroides) protein is Large ribosomal subunit protein uL13.